A 1434-amino-acid chain; its full sequence is Probable ATP-dependent RNA helicase spindle-E (1434 aa).

Positions 126–295 (INAINENPVV…FANESSAPPV (170 aa)) constitute a Helicase ATP-binding domain. 139-146 (GETGCGKT) contacts ATP. The DEAH box signature appears at 241–244 (DEVH). In terms of domain architecture, Helicase C-terminal spans 356–527 (TGKSYNQSLR…NCVLKAKELK (172 aa)). Residues 936-999 (AGAITKGLML…RLMSQDLLRH (64 aa)) form the Tudor domain.

Belongs to the DEAD box helicase family. DEAH subfamily.

It localises to the cytoplasm. It catalyses the reaction ATP + H2O = ADP + phosphate + H(+). Its function is as follows. Probable ATP-binding RNA helicase which plays a central role during spermatogenesis and oogenesis by repressing transposable elements and preventing their mobilization, which is essential for the germline integrity. Acts via the piRNA metabolic process, which mediates the repression of transposable elements during meiosis by forming complexes composed of piRNAs and Piwi and govern the methylation and subsequent repression of transposons. Involved in the repression of LTR retrotransposon copia. Also involved in telomere regulation by repressing specialized telomeric retroelements HeT-A, TAHRE, and TART; Drosophila telomeres being maintained by transposition of specialized telomeric retroelements. Involved in telomeric trans-silencing, a repression mechanism by which a transposon or a transgene inserted in subtelomeric heterochromatin has the capacity to repress in trans in the female germline, a homologous transposon, or transgene located in euchromatin. Involved in the repression of testis-expressed Stellate genes by the homologous Su(Ste) repeats. Required for anteroposterior and dorsoventral axis formation during oogenesis. The sequence is that of Probable ATP-dependent RNA helicase spindle-E (spn-E) from Drosophila persimilis (Fruit fly).